The sequence spans 379 residues: Succinyl-diaminopimelate desuccinylase (379 aa).

Histidine 68 serves as a coordination point for Zn(2+). Aspartate 70 is an active-site residue. Position 101 (aspartate 101) interacts with Zn(2+). Residue glutamate 135 is the Proton acceptor of the active site. Glutamate 136, glutamate 164, and histidine 350 together coordinate Zn(2+).

The protein belongs to the peptidase M20A family. DapE subfamily. Homodimer. Zn(2+) serves as cofactor. The cofactor is Co(2+).

The catalysed reaction is N-succinyl-(2S,6S)-2,6-diaminopimelate + H2O = (2S,6S)-2,6-diaminopimelate + succinate. It functions in the pathway amino-acid biosynthesis; L-lysine biosynthesis via DAP pathway; LL-2,6-diaminopimelate from (S)-tetrahydrodipicolinate (succinylase route): step 3/3. In terms of biological role, catalyzes the hydrolysis of N-succinyl-L,L-diaminopimelic acid (SDAP), forming succinate and LL-2,6-diaminopimelate (DAP), an intermediate involved in the bacterial biosynthesis of lysine and meso-diaminopimelic acid, an essential component of bacterial cell walls. The protein is Succinyl-diaminopimelate desuccinylase of Bordetella parapertussis (strain 12822 / ATCC BAA-587 / NCTC 13253).